A 191-amino-acid polypeptide reads, in one-letter code: ATP-dependent Clp protease proteolytic subunit 1 (191 aa).

The active-site Nucleophile is Ser91. Residue His116 is part of the active site.

Belongs to the peptidase S14 family. Fourteen ClpP subunits assemble into 2 heptameric rings which stack back to back to give a disk-like structure with a central cavity, resembling the structure of eukaryotic proteasomes.

It localises to the cytoplasm. The enzyme catalyses Hydrolysis of proteins to small peptides in the presence of ATP and magnesium. alpha-casein is the usual test substrate. In the absence of ATP, only oligopeptides shorter than five residues are hydrolyzed (such as succinyl-Leu-Tyr-|-NHMec, and Leu-Tyr-Leu-|-Tyr-Trp, in which cleavage of the -Tyr-|-Leu- and -Tyr-|-Trp bonds also occurs).. Cleaves peptides in various proteins in a process that requires ATP hydrolysis. Has a chymotrypsin-like activity. Plays a major role in the degradation of misfolded proteins. This is ATP-dependent Clp protease proteolytic subunit 1 from Chlamydia caviae (strain ATCC VR-813 / DSM 19441 / 03DC25 / GPIC) (Chlamydophila caviae).